Here is a 324-residue protein sequence, read N- to C-terminus: tRNA N6-adenosine threonylcarbamoyltransferase (324 aa).

Positions 107, 111, and 127 each coordinate Fe cation. Substrate-binding positions include 127-131 (YVSGG), Asp159, Gly172, Glu176, and Asn257. Fe cation is bound at residue Asp285.

It belongs to the KAE1 / TsaD family. Monomer. Component of the KEOPS complex that consists of Kae1, Bud32, Cgi121 and Pcc1; the whole complex dimerizes. Requires Fe(2+) as cofactor.

It is found in the cytoplasm. The catalysed reaction is L-threonylcarbamoyladenylate + adenosine(37) in tRNA = N(6)-L-threonylcarbamoyladenosine(37) in tRNA + AMP + H(+). Functionally, required for the formation of a threonylcarbamoyl group on adenosine at position 37 (t(6)A37) in tRNAs that read codons beginning with adenine. Is a component of the KEOPS complex that is probably involved in the transfer of the threonylcarbamoyl moiety of threonylcarbamoyl-AMP (TC-AMP) to the N6 group of A37. Kae1 likely plays a direct catalytic role in this reaction, but requires other protein(s) of the complex to fulfill this activity. The chain is tRNA N6-adenosine threonylcarbamoyltransferase from Pyrococcus horikoshii (strain ATCC 700860 / DSM 12428 / JCM 9974 / NBRC 100139 / OT-3).